A 394-amino-acid chain; its full sequence is L-lactate dehydrogenase (394 aa).

Residues 1–380 enclose the FMN hydroxy acid dehydrogenase domain; the sequence is MIISAASDYR…SRDSLVQNAE (380 aa). Tyr-24 is a binding site for substrate. 2 residues coordinate FMN: Ser-106 and Gln-127. Tyr-129 serves as a coordination point for substrate. Thr-155 contributes to the FMN binding site. Residue Arg-164 coordinates substrate. Lys-251 provides a ligand contact to FMN. His-275 (proton acceptor) is an active-site residue. Arg-278 is a substrate binding site. 306–330 is a binding site for FMN; that stretch reads DSGIRNGLDVVRMIALGADSVLLGR.

This sequence belongs to the FMN-dependent alpha-hydroxy acid dehydrogenase family. FMN serves as cofactor.

It localises to the cell inner membrane. It catalyses the reaction (S)-lactate + A = pyruvate + AH2. Its function is as follows. Catalyzes the conversion of L-lactate to pyruvate. Is coupled to the respiratory chain. This chain is L-lactate dehydrogenase, found in Klebsiella pneumoniae subsp. pneumoniae (strain ATCC 700721 / MGH 78578).